We begin with the raw amino-acid sequence, 244 residues long: Pyridoxine 5'-phosphate synthase (244 aa).

Residue Asn12 participates in 3-amino-2-oxopropyl phosphate binding. 14-15 lines the 1-deoxy-D-xylulose 5-phosphate pocket; it reads DH. Residue Arg23 coordinates 3-amino-2-oxopropyl phosphate. His48 functions as the Proton acceptor in the catalytic mechanism. 1-deoxy-D-xylulose 5-phosphate contacts are provided by Arg50 and His55. The active-site Proton acceptor is the Glu75. Thr105 contributes to the 1-deoxy-D-xylulose 5-phosphate binding site. Residue His196 is the Proton donor of the active site. 3-amino-2-oxopropyl phosphate is bound by residues Gly197 and 218–219; that span reads GH.

This sequence belongs to the PNP synthase family. In terms of assembly, homooctamer; tetramer of dimers.

Its subcellular location is the cytoplasm. The enzyme catalyses 3-amino-2-oxopropyl phosphate + 1-deoxy-D-xylulose 5-phosphate = pyridoxine 5'-phosphate + phosphate + 2 H2O + H(+). It functions in the pathway cofactor biosynthesis; pyridoxine 5'-phosphate biosynthesis; pyridoxine 5'-phosphate from D-erythrose 4-phosphate: step 5/5. Catalyzes the complicated ring closure reaction between the two acyclic compounds 1-deoxy-D-xylulose-5-phosphate (DXP) and 3-amino-2-oxopropyl phosphate (1-amino-acetone-3-phosphate or AAP) to form pyridoxine 5'-phosphate (PNP) and inorganic phosphate. The sequence is that of Pyridoxine 5'-phosphate synthase from Alcanivorax borkumensis (strain ATCC 700651 / DSM 11573 / NCIMB 13689 / SK2).